A 115-amino-acid chain; its full sequence is Pancreatic progenitor cell differentiation and proliferation factor B (115 aa).

Positions 21–48 (IGSTSSSSSCGSSEYSGEVIPHHPGLPK) are disordered. Residues 22–37 (GSTSSSSSCGSSEYSG) show a composition bias toward low complexity.

This sequence belongs to the PPDPF family.

In terms of biological role, probable regulator of exocrine pancreas development. The chain is Pancreatic progenitor cell differentiation and proliferation factor B (ppdpfb) from Danio rerio (Zebrafish).